Reading from the N-terminus, the 241-residue chain is Purine nucleoside phosphorylase DeoD-type (241 aa).

An a purine D-ribonucleoside-binding site is contributed by H5. Residues G21, R25, R44, and 88–91 (RVGS) contribute to the phosphate site. A purine D-ribonucleoside-binding positions include 180–182 (EME) and 204–205 (SD). D205 acts as the Proton donor in catalysis.

This sequence belongs to the PNP/UDP phosphorylase family. As to quaternary structure, homohexamer; trimer of homodimers.

It carries out the reaction a purine D-ribonucleoside + phosphate = a purine nucleobase + alpha-D-ribose 1-phosphate. It catalyses the reaction a purine 2'-deoxy-D-ribonucleoside + phosphate = a purine nucleobase + 2-deoxy-alpha-D-ribose 1-phosphate. In terms of biological role, catalyzes the reversible phosphorolytic breakdown of the N-glycosidic bond in the beta-(deoxy)ribonucleoside molecules, with the formation of the corresponding free purine bases and pentose-1-phosphate. This chain is Purine nucleoside phosphorylase DeoD-type, found in Yersinia enterocolitica serotype O:8 / biotype 1B (strain NCTC 13174 / 8081).